Reading from the N-terminus, the 1577-residue chain is Vacuolar protein sorting/targeting protein PEP1 (1577 aa).

The N-terminal stretch at 1-21 is a signal peptide; it reads MILLHFVYSLWALLLIPLINA. The Lumenal portion of the chain corresponds to 22–1391; that stretch reads EEFTPKVTKT…EFKEKYSVSA (1370 aa). BNR repeat units lie at residues 58 to 68 and 101 to 111; these read ISFDDGETWEK and YITNDQGKSWE. Asn-121 and Asn-168 each carry an N-linked (GlcNAc...) asparagine glycan. 2 BNR repeats span residues 179–187 and 414–423; these read SNDGGKSFS and ISVDNGLTWT. The N-linked (GlcNAc...) asparagine glycan is linked to Asn-445. BNR repeat units lie at residues 485 to 495, 531 to 541, and 762 to 771; these read FISRDGGLTWK, YYSLDQGKTWT, and YISHDGGQTI. N-linked (GlcNAc...) asparagine glycosylation occurs at Asn-791. The stretch at 859 to 869 is one BNR 8 repeat; the sequence is YLTNDGGETFT. A glycan (N-linked (GlcNAc...) asparagine) is linked at Asn-1008. BNR repeat units follow at residues 1141-1150 and 1183-1192; these read FFTTDGGETW and YSTDFGKTWK. Asn-1301 carries N-linked (GlcNAc...) asparagine glycosylation. Residues 1392–1412 form a helical membrane-spanning segment; sequence GPFAFIFISILLIIFFAAWFV. Residues 1413–1577 are Cytoplasmic-facing; the sequence is YDRGIRRNGG…DSTAPSNENQ (165 aa). The tract at residues 1531–1577 is disordered; that stretch reads DDVPTLEEEHTSYTDQPTTTDVPDALPEGNEENIDRPDSTAPSNENQ.

Belongs to the VPS10-related sortilin family.

Its subcellular location is the golgi apparatus. It is found in the trans-Golgi network membrane. The protein localises to the prevacuolar compartment membrane. Functionally, functions as a sorting receptor in the Golgi compartment required for the intracellular sorting and delivery of soluble vacuolar proteins, like carboxypeptidase Y (CPY) and proteinase A. Executes multiple rounds of sorting by cycling between the late Golgi and a prevacuolar endosome-like compartment. Binds the Golgi-modified P2 form of CPY, and this interaction is dependent on the presence of an intact CPY vacuolar protein sorting signal. The chain is Vacuolar protein sorting/targeting protein PEP1 (PEP1) from Saccharomyces cerevisiae (strain RM11-1a) (Baker's yeast).